The primary structure comprises 618 residues: Dihydroxy-acid dehydratase (618 aa).

Asp81 contributes to the Mg(2+) binding site. Position 122 (Cys122) interacts with [2Fe-2S] cluster. Mg(2+) contacts are provided by Asp123 and Lys124. Lys124 is subject to N6-carboxylysine. Residue Cys197 participates in [2Fe-2S] cluster binding. Glu493 is a Mg(2+) binding site. Residue Ser519 is the Proton acceptor of the active site.

It belongs to the IlvD/Edd family. Homodimer. Requires [2Fe-2S] cluster as cofactor. The cofactor is Mg(2+).

The enzyme catalyses (2R)-2,3-dihydroxy-3-methylbutanoate = 3-methyl-2-oxobutanoate + H2O. It carries out the reaction (2R,3R)-2,3-dihydroxy-3-methylpentanoate = (S)-3-methyl-2-oxopentanoate + H2O. It functions in the pathway amino-acid biosynthesis; L-isoleucine biosynthesis; L-isoleucine from 2-oxobutanoate: step 3/4. The protein operates within amino-acid biosynthesis; L-valine biosynthesis; L-valine from pyruvate: step 3/4. In terms of biological role, functions in the biosynthesis of branched-chain amino acids. Catalyzes the dehydration of (2R,3R)-2,3-dihydroxy-3-methylpentanoate (2,3-dihydroxy-3-methylvalerate) into 2-oxo-3-methylpentanoate (2-oxo-3-methylvalerate) and of (2R)-2,3-dihydroxy-3-methylbutanoate (2,3-dihydroxyisovalerate) into 2-oxo-3-methylbutanoate (2-oxoisovalerate), the penultimate precursor to L-isoleucine and L-valine, respectively. The polypeptide is Dihydroxy-acid dehydratase (Bordetella avium (strain 197N)).